A 264-amino-acid chain; its full sequence is Fructose-1,6-bisphosphatase/inositol-1-monophosphatase (264 aa).

Mg(2+)-binding residues include E70, D86, L88, and D89. Residues 89–91 (DGT), R185, and A190 contribute to the substrate site. Mg(2+) is bound at residue D214.

It belongs to the inositol monophosphatase superfamily. FBPase class 4 family. Requires Mg(2+) as cofactor.

It carries out the reaction beta-D-fructose 1,6-bisphosphate + H2O = beta-D-fructose 6-phosphate + phosphate. The catalysed reaction is a myo-inositol phosphate + H2O = myo-inositol + phosphate. In terms of biological role, phosphatase with broad specificity; it can dephosphorylate fructose 1,6-bisphosphate, and both D and L isomers of inositol-1-phosphate (I-1-P). The polypeptide is Fructose-1,6-bisphosphatase/inositol-1-monophosphatase (suhB) (Aquifex aeolicus (strain VF5)).